The chain runs to 131 residues: Large ribosomal subunit protein bL19 (131 aa).

Positions 111–124 (RIAERAERGSEKGK) are enriched in basic and acidic residues. The disordered stretch occupies residues 111 to 131 (RIAERAERGSEKGKTTPAAAE).

Belongs to the bacterial ribosomal protein bL19 family.

Functionally, this protein is located at the 30S-50S ribosomal subunit interface and may play a role in the structure and function of the aminoacyl-tRNA binding site. This Methylobacterium nodulans (strain LMG 21967 / CNCM I-2342 / ORS 2060) protein is Large ribosomal subunit protein bL19.